The following is a 78-amino-acid chain: MTKFSLLDHESVPKHEIISEGELKSVLSKYLIEKEQLPKIKVQDPVSKEIGAVVGDVVRITRKSQTAGEADYYRLVIE.

Belongs to the archaeal Rpo5/eukaryotic RPB5 RNA polymerase subunit family. In terms of assembly, part of the RNA polymerase complex.

The protein localises to the cytoplasm. It carries out the reaction RNA(n) + a ribonucleoside 5'-triphosphate = RNA(n+1) + diphosphate. Its function is as follows. DNA-dependent RNA polymerase (RNAP) catalyzes the transcription of DNA into RNA using the four ribonucleoside triphosphates as substrates. The chain is DNA-directed RNA polymerase subunit Rpo5 from Methanosarcina acetivorans (strain ATCC 35395 / DSM 2834 / JCM 12185 / C2A).